A 126-amino-acid chain; its full sequence is Aspartate 1-decarboxylase (126 aa).

The active-site Schiff-base intermediate with substrate; via pyruvic acid is S25. S25 is modified (pyruvic acid (Ser)). Residue T57 coordinates substrate. The Proton donor role is filled by Y58. 73–75 (GGA) is a substrate binding site.

The protein belongs to the PanD family. In terms of assembly, heterooctamer of four alpha and four beta subunits. Pyruvate serves as cofactor. Post-translationally, is synthesized initially as an inactive proenzyme, which is activated by self-cleavage at a specific serine bond to produce a beta-subunit with a hydroxyl group at its C-terminus and an alpha-subunit with a pyruvoyl group at its N-terminus.

It is found in the cytoplasm. The enzyme catalyses L-aspartate + H(+) = beta-alanine + CO2. It participates in cofactor biosynthesis; (R)-pantothenate biosynthesis; beta-alanine from L-aspartate: step 1/1. Catalyzes the pyruvoyl-dependent decarboxylation of aspartate to produce beta-alanine. This chain is Aspartate 1-decarboxylase, found in Xanthomonas campestris pv. campestris (strain B100).